A 65-amino-acid polypeptide reads, in one-letter code: Large ribosomal subunit protein bL33c (65 aa).

The protein belongs to the bacterial ribosomal protein bL33 family.

The protein resides in the plastid. The protein localises to the chloroplast. This Staurastrum punctulatum (Green alga) protein is Large ribosomal subunit protein bL33c.